Consider the following 338-residue polypeptide: GTPase Obg (338 aa).

One can recognise an Obg domain in the interval Met1–Leu159. The OBG-type G domain occupies Ala160 to Asp328. GTP-binding positions include Gly166–Ser173, Phe191–Ile195, Asp213–Gly216, Asn280–Asp283, and Ser309–Val311. Ser173 and Thr193 together coordinate Mg(2+).

Belongs to the TRAFAC class OBG-HflX-like GTPase superfamily. OBG GTPase family. Monomer. Mg(2+) is required as a cofactor.

The protein resides in the cytoplasm. An essential GTPase which binds GTP, GDP and possibly (p)ppGpp with moderate affinity, with high nucleotide exchange rates and a fairly low GTP hydrolysis rate. Plays a role in control of the cell cycle, stress response, ribosome biogenesis and in those bacteria that undergo differentiation, in morphogenesis control. The protein is GTPase Obg of Gloeothece citriformis (strain PCC 7424) (Cyanothece sp. (strain PCC 7424)).